The following is a 1401-amino-acid chain: DNA-directed RNA polymerase subunit beta' (1401 aa).

The Zn(2+) site is built by Cys70, Cys72, Cys85, and Cys88. Mg(2+) is bound by residues Asp460, Asp462, and Asp464. 4 residues coordinate Zn(2+): Cys814, Cys888, Cys895, and Cys898. Residues 1369 to 1388 (RQKQKAVEQEGPSAEQATDN) form a disordered region.

It belongs to the RNA polymerase beta' chain family. In terms of assembly, the RNAP catalytic core consists of 2 alpha, 1 beta, 1 beta' and 1 omega subunit. When a sigma factor is associated with the core the holoenzyme is formed, which can initiate transcription. It depends on Mg(2+) as a cofactor. Zn(2+) is required as a cofactor.

The enzyme catalyses RNA(n) + a ribonucleoside 5'-triphosphate = RNA(n+1) + diphosphate. In terms of biological role, DNA-dependent RNA polymerase catalyzes the transcription of DNA into RNA using the four ribonucleoside triphosphates as substrates. The sequence is that of DNA-directed RNA polymerase subunit beta' from Aliivibrio fischeri (strain ATCC 700601 / ES114) (Vibrio fischeri).